Here is a 407-residue protein sequence, read N- to C-terminus: Large ribosomal subunit protein uL3-like (407 aa).

Residues 1–31 (MSHRKFSAPRHGHLGFLPHKRSRRHRGKVKS) show a composition bias toward basic residues. Positions 1 to 37 (MSHRKFSAPRHGHLGFLPHKRSRRHRGKVKSWPRDDP) are disordered.

This sequence belongs to the universal ribosomal protein uL3 family. As to quaternary structure, component of the large ribosomal subunit (LSU). Part of a LSU subcomplex, the 5S RNP which is composed of the 5S RNA, RPL5 and RPL11. Interacts with NVL in an ATP-dependent manner. Interacts with RRP1B. Interacts with IPO5, IPO7 and KPNB1; these interactions may be involved in RPL5 nuclear import for the assembly of ribosomal subunits. Interacts with RRP1B. In terms of tissue distribution, expression is restricted to striated muscles.

Functionally, heart- and skeletal muscle-specific component of the ribosome, which regulates muscle function. Component of the large ribosomal subunit in striated muscle cells: replaces the RPL3 paralog in the ribosome in these cells. The ribosome is a large ribonucleoprotein complex responsible for the synthesis of proteins in the cell. Inhibits myotube growth and muscle function. The sequence is that of Large ribosomal subunit protein uL3-like from Mus musculus (Mouse).